A 367-amino-acid polypeptide reads, in one-letter code: UDP-N-acetylglucosamine--N-acetylmuramyl-(pentapeptide) pyrophosphoryl-undecaprenol N-acetylglucosamine transferase (367 aa).

Residues 13 to 15, Asn125, Arg165, Ser192, and Gln293 contribute to the UDP-N-acetyl-alpha-D-glucosamine site; that span reads TGG.

This sequence belongs to the glycosyltransferase 28 family. MurG subfamily.

Its subcellular location is the cell inner membrane. It carries out the reaction di-trans,octa-cis-undecaprenyl diphospho-N-acetyl-alpha-D-muramoyl-L-alanyl-D-glutamyl-meso-2,6-diaminopimeloyl-D-alanyl-D-alanine + UDP-N-acetyl-alpha-D-glucosamine = di-trans,octa-cis-undecaprenyl diphospho-[N-acetyl-alpha-D-glucosaminyl-(1-&gt;4)]-N-acetyl-alpha-D-muramoyl-L-alanyl-D-glutamyl-meso-2,6-diaminopimeloyl-D-alanyl-D-alanine + UDP + H(+). Its pathway is cell wall biogenesis; peptidoglycan biosynthesis. Cell wall formation. Catalyzes the transfer of a GlcNAc subunit on undecaprenyl-pyrophosphoryl-MurNAc-pentapeptide (lipid intermediate I) to form undecaprenyl-pyrophosphoryl-MurNAc-(pentapeptide)GlcNAc (lipid intermediate II). The chain is UDP-N-acetylglucosamine--N-acetylmuramyl-(pentapeptide) pyrophosphoryl-undecaprenol N-acetylglucosamine transferase from Jannaschia sp. (strain CCS1).